The primary structure comprises 334 residues: Glyceraldehyde-3-phosphate dehydrogenase (334 aa).

Residues 10-11 (RI), Asp-33, Lys-77, and Thr-119 contribute to the NAD(+) site. D-glyceraldehyde 3-phosphate-binding positions include 149–151 (SCT), Thr-180, 209–210 (TG), and Arg-232. Residue Cys-150 is the Nucleophile of the active site. NAD(+) is bound at residue Asn-314.

It belongs to the glyceraldehyde-3-phosphate dehydrogenase family. In terms of assembly, homotetramer.

The protein resides in the cytoplasm. The enzyme catalyses D-glyceraldehyde 3-phosphate + phosphate + NAD(+) = (2R)-3-phospho-glyceroyl phosphate + NADH + H(+). It functions in the pathway carbohydrate degradation; glycolysis; pyruvate from D-glyceraldehyde 3-phosphate: step 1/5. Its function is as follows. Catalyzes the oxidative phosphorylation of glyceraldehyde 3-phosphate (G3P) to 1,3-bisphosphoglycerate (BPG) using the cofactor NAD. The first reaction step involves the formation of a hemiacetal intermediate between G3P and a cysteine residue, and this hemiacetal intermediate is then oxidized to a thioester, with concomitant reduction of NAD to NADH. The reduced NADH is then exchanged with the second NAD, and the thioester is attacked by a nucleophilic inorganic phosphate to produce BPG. This Chlamydia trachomatis serovar D (strain ATCC VR-885 / DSM 19411 / UW-3/Cx) protein is Glyceraldehyde-3-phosphate dehydrogenase (gap).